Reading from the N-terminus, the 415-residue chain is UV excision repair protein RAD23 homolog B (415 aa).

The Ubiquitin-like domain maps to 1–79; that stretch reads MQVTLKTLQQ…VVVMVTKPKA (79 aa). The tract at residues 80–175 is disordered; sequence VTSAVPATTQ…STPGDSSRSN (96 aa). Positions 84-143 are enriched in low complexity; it reads VPATTQQSSSPSTTTVSSSPAAAVAQAPAPTPALAPTSTPASTTPASTTASSEPAPTGAT. At T155 the chain carries Phosphothreonine. A phosphoserine mark is found at S160 and S174. Position 186 is a phosphothreonine (T186). The region spanning 188–228 is the UBA 1 domain; the sequence is QSYENMVTEIMSMGYEREQVIAALRASFNNPDRAVEYLLMG. A Phosphoserine modification is found at S199. Y202 bears the Phosphotyrosine mark. Positions 274–317 constitute an STI1 domain; it reads HPLEFLRNQPQFQQMRQIIQQNPSLLPALLQQIGRENPQLLQQI. The disordered stretch occupies residues 334-355; that stretch reads EAGGQGGGGGGGGGGGGGGGGI. Gly residues predominate over residues 336–355; the sequence is GGQGGGGGGGGGGGGGGGGI. In terms of domain architecture, UBA 2 spans 370–410; it reads PQEKEAIERLKALGFPEGLVIQAYFACEKNENLAANFLLQQ.

The protein belongs to the RAD23 family. In terms of assembly, component of the XPC complex composed of XPC, RAD23B and CETN2. Interacts with NGLY1 and PSMC1. Interacts with ATXN3. Interacts with AMFR. Interacts with VCP; the interaction is indirect and mediated by NGLY1.

The protein resides in the nucleus. It is found in the cytoplasm. In terms of biological role, multiubiquitin chain receptor involved in modulation of proteasomal degradation. Binds to polyubiquitin chains. Proposed to be capable to bind simultaneously to the 26S proteasome and to polyubiquitinated substrates and to deliver ubiquitinated proteins to the proteasome. May play a role in endoplasmic reticulum-associated degradation (ERAD) of misfolded glycoproteins by association with PNGase and delivering deglycosylated proteins to the proteasome. Its function is as follows. Involved in global genome nucleotide excision repair (GG-NER) by acting as component of the XPC complex. Cooperatively with Cetn2 appears to stabilize Xpc. May protect Xpc from proteasomal degradation. Functionally, the XPC complex is proposed to represent the first factor bound at the sites of DNA damage and together with other core recognition factors, Xpa, RPA and the TFIIH complex, is part of the pre-incision (or initial recognition) complex. The XPC complex recognizes a wide spectrum of damaged DNA characterized by distortions of the DNA helix such as single-stranded loops, mismatched bubbles or single-stranded overhangs. The orientation of XPC complex binding appears to be crucial for inducing a productive NER. XPC complex is proposed to recognize and to interact with unpaired bases on the undamaged DNA strand which is followed by recruitment of the TFIIH complex and subsequent scanning for lesions in the opposite strand in a 5'-to-3' direction by the NER machinery. Cyclobutane pyrimidine dimers (CPDs) which are formed upon UV-induced DNA damage esacpe detection by the XPC complex due to a low degree of structural perurbation. Instead they are detected by the UV-DDB complex which in turn recruits and cooperates with the XPC complex in the respective DNA repair. In vitro, the XPC:RAD23B dimer is sufficient to initiate NER; it preferentially binds to cisplatin and UV-damaged double-stranded DNA and also binds to a variety of chemically and structurally diverse DNA adducts. XPC:RAD23B contacts DNA both 5' and 3' of a cisplatin lesion with a preference for the 5' side. Xpc:Rad22b induces a bend in DNA upon binding. Xpc:Rad23b stimulates the activity of DNA glycosylases Tdg and Smug1. This Rattus norvegicus (Rat) protein is UV excision repair protein RAD23 homolog B (Rad23b).